Reading from the N-terminus, the 437-residue chain is Transcription factor AP-2-alpha (437 aa).

Lys-10 participates in a covalent cross-link: Glycyl lysine isopeptide (Lys-Gly) (interchain with G-Cter in SUMO); alternate. A Glycyl lysine isopeptide (Lys-Gly) (interchain with G-Cter in SUMO2); alternate cross-link involves residue Lys-10. The interval 14-107 (CEDRHDGTSN…GQRQSQESGL (94 aa)) is disordered. The PPxY motif signature appears at 57–62 (YFPPPY). Composition is skewed to low complexity over residues 65–74 (IYPQSQDPYS) and 88–101 (QPQP…GQRQ). Residues Lys-177 and Lys-184 each participate in a glycyl lysine isopeptide (Lys-Gly) (interchain with G-Cter in SUMO2) cross-link. Residue Ser-239 is modified to Phosphoserine; by PKA. The segment at 280–410 (RRKAANVTLL…YLTEALKAMD (131 aa)) is H-S-H (helix-span-helix), dimerization. The span at 414–427 (LSNNPNSHTDNNAK) shows a compositional bias: polar residues. Residues 414-437 (LSNNPNSHTDNNAKSSDKEEKHRK) form a disordered region. A compositionally biased stretch (basic and acidic residues) spans 428-437 (SSDKEEKHRK).

It belongs to the AP-2 family. As to quaternary structure, binds DNA as a dimer. Can form homodimers or heterodimers with other AP-2 family members. Interacts with WWOX. Interacts with CITED4. Interacts with UBE2I. Interacts with RALBP1 in a complex also containing EPN1 and NUMB during interphase and mitosis. Interacts with KCTD1; this interaction represses transcription activation. Interacts (via C-terminus) with CITED2 (via C-terminus); the interaction stimulates TFAP2A-transcriptional activation. Interacts (via N-terminus) with EP300 (via N-terminus); the interaction requires CITED2. Interacts with KCTD15; this interaction inhibits TFAP2A transcriptional activation. In terms of processing, sumoylated on Lys-10; which inhibits transcriptional activity.

It localises to the nucleus. Functionally, sequence-specific DNA-binding protein that interacts with inducible viral and cellular enhancer elements to regulate transcription of selected genes. AP-2 factors bind to the consensus sequence 5'-GCCNNNGGC-3' and activate genes involved in a large spectrum of important biological functions including proper eye, face, body wall, limb and neural tube development. They also suppress a number of genes including MCAM/MUC18, C/EBP alpha and MYC. AP-2-alpha is the only AP-2 protein required for early morphogenesis of the lens vesicle. Together with the CITED2 coactivator, stimulates the PITX2 P1 promoter transcription activation. Associates with chromatin to the PITX2 P1 promoter region. This chain is Transcription factor AP-2-alpha (TFAP2A), found in Homo sapiens (Human).